The sequence spans 767 residues: Phosphoribosylformylglycinamidine synthase subunit PurL (767 aa).

The active site involves His-46. ATP contacts are provided by Tyr-49 and Lys-88. Residue Glu-90 coordinates Mg(2+). Substrate-binding positions include 91 to 94 (SHNH) and Arg-113. His-92 acts as the Proton acceptor in catalysis. Asp-114 serves as a coordination point for Mg(2+). Gln-237 is a substrate binding site. Asp-265 serves as a coordination point for Mg(2+). 309 to 311 (ESQ) is a binding site for substrate. ATP is bound by residues Asp-498 and Gly-535. Residue Asn-536 participates in Mg(2+) binding. Substrate is bound at residue Ser-538.

It belongs to the FGAMS family. As to quaternary structure, monomer. Part of the FGAM synthase complex composed of 1 PurL, 1 PurQ and 2 PurS subunits.

It localises to the cytoplasm. It carries out the reaction N(2)-formyl-N(1)-(5-phospho-beta-D-ribosyl)glycinamide + L-glutamine + ATP + H2O = 2-formamido-N(1)-(5-O-phospho-beta-D-ribosyl)acetamidine + L-glutamate + ADP + phosphate + H(+). It functions in the pathway purine metabolism; IMP biosynthesis via de novo pathway; 5-amino-1-(5-phospho-D-ribosyl)imidazole from N(2)-formyl-N(1)-(5-phospho-D-ribosyl)glycinamide: step 1/2. Its function is as follows. Part of the phosphoribosylformylglycinamidine synthase complex involved in the purines biosynthetic pathway. Catalyzes the ATP-dependent conversion of formylglycinamide ribonucleotide (FGAR) and glutamine to yield formylglycinamidine ribonucleotide (FGAM) and glutamate. The FGAM synthase complex is composed of three subunits. PurQ produces an ammonia molecule by converting glutamine to glutamate. PurL transfers the ammonia molecule to FGAR to form FGAM in an ATP-dependent manner. PurS interacts with PurQ and PurL and is thought to assist in the transfer of the ammonia molecule from PurQ to PurL. The chain is Phosphoribosylformylglycinamidine synthase subunit PurL from Anaeromyxobacter sp. (strain Fw109-5).